The following is a 695-amino-acid chain: DUF724 domain-containing protein 3 (695 aa).

The disordered stretch occupies residues 376–464; it reads ITVTPLKQQD…GTSDTIRVDD (89 aa). The segment covering 384–402 has biased composition (basic and acidic residues); that stretch reads QDAETEGKKSPKKTPEPVK. Over residues 434 to 459 the composition is skewed to polar residues; the sequence is NQNSNLNETDETCNVSKAGVNGTSDT. The 186-residue stretch at 509 to 694 folds into the DUF724 domain; the sequence is PFTKNLPFWK…LEFITSVLAP (186 aa). Positions 614–684 form a coiled coil; that stretch reads VEERKCLEKR…TIDQEIANVE (71 aa).

In terms of assembly, homodimer.

In terms of biological role, may be involved in the polar growth of plant cells via transportation of RNAs. The protein is DUF724 domain-containing protein 3 of Arabidopsis thaliana (Mouse-ear cress).